The following is a 434-amino-acid chain: Na(+)/H(+) antiporter NhaA 1 (434 aa).

Residues 1 to 15 (MISPNPALPTPPHAP) show a composition bias toward pro residues. The segment at 1-21 (MISPNPALPTPPHAPTAPGRG) is disordered. 12 helical membrane passes run 34 to 54 (GGIL…SPAA), 74 to 94 (LSVS…VVGL), 112 to 132 (ALPI…FTLI), 143 to 163 (GWAI…AVVG), 173 to 193 (FLLT…AVFY), 196 to 216 (GIAF…GILV), 222 to 242 (AWYV…ASGI), 245 to 265 (TIAG…RAGV), 294 to 314 (IAVP…LEGL), 326 to 346 (IIVA…LLVA), 362 to 382 (VLGL…VGEL), and 393 to 413 (AVKV…GTLL).

Belongs to the NhaA Na(+)/H(+) (TC 2.A.33) antiporter family.

It is found in the cell membrane. It carries out the reaction Na(+)(in) + 2 H(+)(out) = Na(+)(out) + 2 H(+)(in). Functionally, na(+)/H(+) antiporter that extrudes sodium in exchange for external protons. The polypeptide is Na(+)/H(+) antiporter NhaA 1 (Clavibacter michiganensis subsp. michiganensis (strain NCPPB 382)).